The sequence spans 340 residues: Fructose-1,6-bisphosphatase, cytosolic (340 aa).

The Mg(2+) site is built by glutamate 71, glutamate 100, aspartate 121, leucine 123, and aspartate 124. Residues 124–127, asparagine 215, tyrosine 247, tyrosine 267, and lysine 277 contribute to the substrate site; that span reads DGSS. Glutamate 283 is a binding site for Mg(2+).

Belongs to the FBPase class 1 family. The cofactor is Mg(2+).

The protein localises to the cytoplasm. It carries out the reaction beta-D-fructose 1,6-bisphosphate + H2O = beta-D-fructose 6-phosphate + phosphate. In Solanum tuberosum (Potato), this protein is Fructose-1,6-bisphosphatase, cytosolic.